Here is a 720-residue protein sequence, read N- to C-terminus: Polyribonucleotide nucleotidyltransferase (720 aa).

Asp-487 and Asp-493 together coordinate Mg(2+). One can recognise a KH domain in the interval 554–613 (PRIETFKIPTDKIREVIGTGGKVIREIVEKTGAKVNIEDDGTVKVASSDGEAMKAAIKWI). An S1 motif domain is found at 623–691 (GQIYDGTVVK…DRGKTRLSMK (69 aa)). Residues 699–720 (EDLEAKDKVAEGEKAPREAAGE) are disordered. Residues 701–720 (LEAKDKVAEGEKAPREAAGE) are compositionally biased toward basic and acidic residues.

Belongs to the polyribonucleotide nucleotidyltransferase family. Mg(2+) is required as a cofactor.

The protein localises to the cytoplasm. It carries out the reaction RNA(n+1) + phosphate = RNA(n) + a ribonucleoside 5'-diphosphate. Its function is as follows. Involved in mRNA degradation. Catalyzes the phosphorolysis of single-stranded polyribonucleotides processively in the 3'- to 5'-direction. The protein is Polyribonucleotide nucleotidyltransferase of Bradyrhizobium diazoefficiens (strain JCM 10833 / BCRC 13528 / IAM 13628 / NBRC 14792 / USDA 110).